Reading from the N-terminus, the 876-residue chain is Alanine--tRNA ligase (876 aa).

Residues 2 to 461 (SKSTAEIRQA…VDSASEFKGY (460 aa)) form a catalytic region. Lysine 74 bears the N6-acetyllysine mark. An editing region spans residues 553–705 (DEARRARIRL…EAVTGEGAIA (153 aa)). 4 residues coordinate Zn(2+): histidine 564, histidine 568, cysteine 666, and histidine 670. The tract at residues 699–808 (TGEGAIATVH…STIIVLATVV (110 aa)) is important for oligomerization. A C-Ala domain region spans residues 766 to 875 (IDVNGVKLLV…SVKGWVSAKL (110 aa)).

It belongs to the class-II aminoacyl-tRNA synthetase family. As to quaternary structure, homotetramer. Zn(2+) is required as a cofactor.

Its subcellular location is the cytoplasm. The catalysed reaction is tRNA(Ala) + L-alanine + ATP = L-alanyl-tRNA(Ala) + AMP + diphosphate. The enzyme catalyses (S)-lactate + ATP + H(+) = (S)-lactoyl-AMP + diphosphate. It catalyses the reaction (S)-lactoyl-AMP + L-lysyl-[protein] = N(6)-[(S)-lactoyl]-L-lysyl-[protein] + AMP + 2 H(+). With respect to regulation, acetylation at Lys-74 decreases the alanylation activity for tRNA(Ala); a protein that is fully acetylated is inactive in vitro. Its function is as follows. Catalyzes the attachment of L-alanine to tRNA(Ala) in a two-step reaction: L-alanine is first activated by ATP to form Ala-AMP and then transferred to the acceptor end of tRNA(Ala). AlaRS also incorrectly activates the sterically smaller amino acid glycine as well as the sterically larger amino acid L-serine; generates 2-fold more mischarged Gly than Ser. These mischarged amino acids occur because the of inherent physicochemical limitations on discrimination between closely related amino acids (Ala, Gly and Ser) in the charging step. In presence of high levels of lactate, also acts as a protein lactyltransferase that mediates lactylation of lysine residues in target proteins. Functionally, edits mischarged Ser-tRNA(Ala) and Gly-tRNA(Ala) but not incorrectly charged Ser-tRNA(Thr). Dtd edits Gly-tRNA(Ala) 4-fold better than does AlaRS. In terms of biological role, attaches Ala to transfer-messenger RNA (tmRNA, also known as 10Sa RNA, the product of the ssrA gene). tmRNA plays a major role in rescue of stalled ribosomes via trans-translation. The polypeptide is Alanine--tRNA ligase (alaS) (Escherichia coli (strain K12)).